Reading from the N-terminus, the 433-residue chain is Inward rectifier potassium channel 18 (433 aa).

The Cytoplasmic segment spans residues 1–77; it reads MTAASRANPY…LADMFTTCVD (77 aa). A helical transmembrane segment spans residues 78-104; the sequence is IRWRYMLLIFSLAFLASWLLFGVIFWV. The Extracellular segment spans residues 105–129; that stretch reads IAVAHGDLEPAEGHGRTPCVMQVHG. Residues 130–146 constitute an intramembrane region (helical; Pore-forming); the sequence is FMAAFLFSIETQTTIGY. Positions 143–148 match the Selectivity filter motif; that stretch reads TIGYGL. The Extracellular portion of the chain corresponds to 147 to 155; sequence GLRCVTEEC. A helical membrane pass occupies residues 156-183; that stretch reads LVAVFMVVAQSIVGCIIDSFMIGAIMAK. Topologically, residues 184–433 are cytoplasmic; the sequence is MARPKKRAQT…QRPYRRGSEI (250 aa). The segment at 387 to 433 is disordered; it reads DEEDEADGDQDGRSRDGLSPQARHDFDRLQAGGGVLEQRPYRRGSEI. The span at 396-414 shows a compositional bias: basic and acidic residues; sequence QDGRSRDGLSPQARHDFDR.

It belongs to the inward rectifier-type potassium channel (TC 1.A.2.1) family. KCNJ12 subfamily. Can form heteromeric channels with Kir2.1/KCNJ2. Can form heteromeric channels with Kir2.2/KCNJ12. Probably phosphorylated by PKC; decreases single-channel open probability. Specifically expressed in skeletal muscle.

Its subcellular location is the cell membrane. It localises to the endoplasmic reticulum. The catalysed reaction is K(+)(in) = K(+)(out). In terms of biological role, inward rectifier potassium channels are characterized by a greater tendency to allow potassium to flow into the cell rather than out of it. Their voltage dependence is regulated by the concentration of extracellular potassium; as external potassium is raised, the voltage range of the channel opening shifts to more positive voltages. The inward rectification is mainly due to the blockage of outward current by internal magnesium. The sequence is that of Inward rectifier potassium channel 18 (KCNJ18) from Homo sapiens (Human).